A 751-amino-acid polypeptide reads, in one-letter code: Serine/threonine-protein kinase B-raf (751 aa).

Over residues 1–32 (MAALSGGGGSSSGGGGGGGGGGGGGDGGGGAE) the composition is skewed to gly residues. Residues 1 to 55 (MAALSGGGGSSSGGGGGGGGGGGGGDGGGGAEQGQALFNGDMEPEAGAGAAASSA) form a disordered region. At A2 the chain carries N-acetylalanine. Over residues 46–55 (AGAGAAASSA) the composition is skewed to low complexity. Phosphoserine is present on S135. Residues 139–211 (PIVRVFLPNK…TGEELHVEVL (73 aa)) enclose the RBD domain. H219, C232, C235, C245, C248, H253, C256, and C264 together coordinate Zn(2+). The interval 288-440 (EASFPETALP…SSDDWEIPDG (153 aa)) is disordered. The segment covering 297–324 (PSGSSSAPPSDSTGPQILTSPSPSKSIP) has biased composition (low complexity). Position 316 is a phosphoserine (S316). Residues 331-346 (PADEDHRNQFGQRDRS) show a composition bias toward basic and acidic residues. The residue at position 348 (S348) is a Phosphoserine. The residue at position 356 (T356) is a Phosphothreonine; by autocatalysis. Residue T379 is modified to Phosphothreonine. Phosphoserine is present on S382. At T384 the chain carries Phosphothreonine. Positions 406–432 (QRERKSSSSSSSEDRSRMKTLGRRDSS) are enriched in basic and acidic residues. S431 and S432 each carry phosphoserine. The 261-residue stretch at 442 to 702 (ITVGQRIGSG…PQILASIELL (261 aa)) folds into the Protein kinase domain. Residues 448 to 456 (IGSGSFGTV) and K468 contribute to the ATP site. Residue D561 is the Proton acceptor of the active site. K563 is covalently cross-linked (Glycyl lysine isopeptide (Lys-Gly) (interchain with G-Cter in ubiquitin)). R656 is subject to Omega-N-methylarginine; by PRMT5. Residues S714 and S735 each carry the phosphoserine modification. The residue at position 738 (T738) is a Phosphothreonine; by MAPK1.

Belongs to the protein kinase superfamily. TKL Ser/Thr protein kinase family. RAF subfamily. Monomer. Homodimer. Heterodimerizes with RAF1, and the heterodimer possesses a highly increased kinase activity compared to the respective homodimers or monomers. Heterodimerization is mitogen-regulated and enhanced by 14-3-3 proteins. MAPK1/ERK2 activation can induce a negative feedback that promotes the dissociation of the heterodimer by phosphorylating BRAF at Thr-738. Heterodimerizes (via N-terminus) with KSR1 (via N-terminus) or KSR2 (via N-terminus) in a MAP2K1-dependent manner. Interacts with MAP2K1 and MAP2K2. Found in a complex with at least BRAF, HRAS, MAP2K1, MAPK3 and RGS14. Interacts with RIT1. Interacts (via N-terminus) with RGS14 (via RBD domains); the interaction mediates the formation of a ternary complex with RAF1, a ternary complex inhibited by GNAI1. Interacts with DGKH. Interacts with PRMT5. Interacts with AKAP13, MAP2K1 and KSR1. Identified in a complex with AKAP13, KSR1 and MAP2K1. Interacts with FNIP1 and FNIP2. Requires Zn(2+) as cofactor. In terms of processing, phosphorylation at Ser-348 by SGK1 inhibits its activity. Dephosphorylation of Ser-348 by the SHOC2-MRAS-PP1c (SMP) complex consisting of SHOC2, GTP-bound M-Ras/MRAS and the catalytic subunit of protein phosphatase 1 (PPP1CA, PPP1CB or PPP1CC); this relieves inactivation and stimulates kinase activity. Methylation by PRMT5 decreases stability and kinase activity. Post-translationally, ubiquitinated by RNF149; which leads to proteasomal degradation. Polyubiquitinated at Lys-615 in response to EGF.

Its subcellular location is the nucleus. It localises to the cytoplasm. It is found in the cell membrane. The catalysed reaction is L-seryl-[protein] + ATP = O-phospho-L-seryl-[protein] + ADP + H(+). It catalyses the reaction L-threonyl-[protein] + ATP = O-phospho-L-threonyl-[protein] + ADP + H(+). Its activity is regulated as follows. In quiescent cells, maintained in an inactive state via an intramolecular interaction between the protein kinase and N-terminal domains. Following mitogen-mediated cell activation, binds via its RGB domain to active HRAS (GTP-bound) which releases the inhibitory intramolecular interaction between the two domains. This allows the MAP2K1-mediated dimerization of KSR1 or KSR2, and BRAF which activates BRAF. Involved in the transduction of mitogenic signals from the cell membrane to the nucleus. Phosphorylates MAP2K1, and thereby activates the MAP kinase signal transduction pathway. Phosphorylates PFKFB2. May play a role in the postsynaptic responses of hippocampal neurons. This is Serine/threonine-protein kinase B-raf from Mus musculus (Mouse).